The sequence spans 168 residues: uncharacterized protein (168 aa).

Residues 18–73 (RTTVKTKSHNPKTLYPNNKPRWESKLHAGPKGFQSSRTSEKPGRPDPDPEDDPPIP) are disordered. Residues 55-64 (TSEKPGRPDP) are compositionally biased toward basic and acidic residues. A run of 2 helical transmembrane segments spans residues 84 to 104 (IVVS…VLEV) and 113 to 133 (VPLW…ALGI).

Its subcellular location is the membrane. This is an uncharacterized protein from Arabidopsis thaliana (Mouse-ear cress).